The chain runs to 55 residues: Large ribosomal subunit protein bL33A (55 aa).

The protein belongs to the bacterial ribosomal protein bL33 family.

The protein is Large ribosomal subunit protein bL33A of Mycobacterium sp. (strain JLS).